A 117-amino-acid chain; its full sequence is Eukaryotic translation initiation factor 4E-binding protein 1 (117 aa).

2 stretches are compositionally biased toward polar residues: residues 1-12 (MSAGSSCSQTPS) and 33-47 (YSTT…TTPG). A disordered region spans residues 1–47 (MSAGSSCSQTPSRAIPTRRVALGDGVQLPPGDYSTTPGGTLFSTTPG). An N-acetylserine modification is found at Ser2. Phosphothreonine is present on residues Thr36 and Thr40. Ser43 is modified (phosphoserine). 2 positions are modified to phosphothreonine: Thr45 and Thr49. Phosphotyrosine is present on Tyr53. Positions 53-59 (YDRKFLM) match the YXXXXLphi motif motif. Residue Lys56 forms a Glycyl lysine isopeptide (Lys-Gly) (interchain with G-Cter in ubiquitin) linkage. A Phosphoserine modification is found at Ser64. The tract at residues 64–117 (SPVAKTPPKDLPAIPGVTSPTSDEPPMQASQSQLPSSPEDKRAGGEESQFEMDI) is disordered. Residue Thr69 is modified to Phosphothreonine. Residues 81 to 99 (TSPTSDEPPMQASQSQLPS) show a composition bias toward polar residues. Phosphoserine is present on residues Ser82, Ser95, Ser99, Ser100, and Ser111. The short motif at 113–117 (FEMDI) is the TOS motif element.

Belongs to the eIF4E-binding protein family. In terms of assembly, hypophosphorylated EIF4EBP1 competes with EIF4G1/EIF4G3 to interact with EIF4E; insulin stimulated MAP-kinase (MAPK1 and MAPK3) or mTORC1 phosphorylation of EIF4EBP1 causes dissociation of the complex allowing EIF4G1/EIF4G3 to bind and consequent initiation of translation. Interacts (via TOS motif) with RPTOR; promoting phosphorylation by mTORC1. Phosphorylated on serine and threonine residues in response to insulin, EGF and PDGF. Phosphorylation at Thr-36, Thr-45, Ser-64 and Thr-69, corresponding to the hyperphosphorylated form, is regulated by mTORC1 and abolishes binding to EIF4E. Post-translationally, ubiquitinated: when eIF4E levels are low, hypophosphorylated form is ubiquitinated by the BCR(KLHL25) complex, leading to its degradation and serving as a homeostatic mechanism to maintain translation and prevent eIF4E inhibition when eIF4E levels are low. Not ubiquitinated when hyperphosphorylated (at Thr-36, Thr-45, Ser-64 and Thr-69) or associated with eIF4E. In terms of tissue distribution, highest expression in fat cells.

The protein localises to the cytoplasm. Its subcellular location is the nucleus. Its function is as follows. Repressor of translation initiation that regulates EIF4E activity by preventing its assembly into the eIF4F complex: hypophosphorylated form competes with EIF4G1/EIF4G3 and strongly binds to EIF4E, leading to repress translation. In contrast, hyperphosphorylated form dissociates from EIF4E, allowing interaction between EIF4G1/EIF4G3 and EIF4E, leading to initiation of translation. Mediates the regulation of protein translation by hormones, growth factors and other stimuli that signal through the MAP kinase and mTORC1 pathways. This Mus musculus (Mouse) protein is Eukaryotic translation initiation factor 4E-binding protein 1 (Eif4ebp1).